A 75-amino-acid chain; its full sequence is Putative sulfur carrier protein YrkI (75 aa).

Cys-14 functions as the Cysteine persulfide intermediate in the catalytic mechanism.

It belongs to the sulfur carrier protein TusA family.

This chain is Putative sulfur carrier protein YrkI (yrkI), found in Bacillus subtilis (strain 168).